The primary structure comprises 236 residues: Ribose-5-phosphate isomerase A (236 aa).

Substrate-binding positions include 28–31 (TGST), 83–86 (DGAD), and 96–99 (KGGG). Residue Glu105 is the Proton acceptor of the active site. Lys123 lines the substrate pocket.

It belongs to the ribose 5-phosphate isomerase family. As to quaternary structure, homodimer.

The catalysed reaction is aldehydo-D-ribose 5-phosphate = D-ribulose 5-phosphate. It participates in carbohydrate degradation; pentose phosphate pathway; D-ribose 5-phosphate from D-ribulose 5-phosphate (non-oxidative stage): step 1/1. Functionally, catalyzes the reversible conversion of ribose-5-phosphate to ribulose 5-phosphate. This Methylorubrum extorquens (strain CM4 / NCIMB 13688) (Methylobacterium extorquens) protein is Ribose-5-phosphate isomerase A.